The sequence spans 336 residues: uncharacterized protein (336 aa).

It to bacterial alkanal monooxygenase alpha and beta chains.

This is an uncharacterized protein from Bacillus subtilis (strain 168).